The chain runs to 284 residues: Bifunctional protein FolD (284 aa).

NADP(+)-binding positions include 166–168 (GAS) and isoleucine 232.

The protein belongs to the tetrahydrofolate dehydrogenase/cyclohydrolase family. In terms of assembly, homodimer.

It catalyses the reaction (6R)-5,10-methylene-5,6,7,8-tetrahydrofolate + NADP(+) = (6R)-5,10-methenyltetrahydrofolate + NADPH. The enzyme catalyses (6R)-5,10-methenyltetrahydrofolate + H2O = (6R)-10-formyltetrahydrofolate + H(+). Its pathway is one-carbon metabolism; tetrahydrofolate interconversion. Its function is as follows. Catalyzes the oxidation of 5,10-methylenetetrahydrofolate to 5,10-methenyltetrahydrofolate and then the hydrolysis of 5,10-methenyltetrahydrofolate to 10-formyltetrahydrofolate. In Shewanella amazonensis (strain ATCC BAA-1098 / SB2B), this protein is Bifunctional protein FolD.